The sequence spans 106 residues: Valine dehydrogenase (106 aa).

The active site involves K91.

The protein belongs to the Glu/Leu/Phe/Val dehydrogenases family. Homodimer.

It localises to the cytoplasm. The enzyme catalyses L-valine + NAD(+) + H2O = 3-methyl-2-oxobutanoate + NH4(+) + NADH + H(+). It functions in the pathway amino-acid degradation; L-valine degradation. In terms of biological role, oxidative deamination of branched-chain amino acids. The catabolism of valine is the major source of fatty acid precursors for macrolide biosynthesis and a vital source of antibiotic precursors. The sequence is that of Valine dehydrogenase (vdh) from Streptomyces ambofaciens.